Here is an 815-residue protein sequence, read N- to C-terminus: Chromatin assembly factor 1 subunit FAS1 (815 aa).

Disordered regions lie at residues 1–39 (MDEV…TSEE), 292–330 (NNKE…KKQL), 434–477 (KLST…KKSR), 502–577 (QVVK…EGVQ), and 791–815 (RCLP…NENA). Composition is skewed to basic and acidic residues over residues 10-21 (NENRKTMIEPKK) and 292-328 (NNKE…ELKK). Positions 244-336 (EEKLLLKQLE…KKQLQVQKQA (93 aa)) form a coiled coil. Composition is skewed to acidic residues over residues 516–532 (LDYE…EEAG) and 554–576 (DDED…DEGV). The span at 806–815 (AAERLENENA) shows a compositional bias: basic and acidic residues.

This sequence belongs to the CHAF1A family. Component of the chromatin assembly factor 1 (CAF-1) complex, composed of FAS1, FAS2 and MSI1. Interacts with CYP71. Expressed in the shoot apical meristem, young leaf primordia, root tip and first lateral root primordium at the hypocotyl/root junction.

It localises to the nucleus. Functionally, component of the chromatin assembly factor complex (CAF-1) involved in chromatin assembly following DNA replication and DNA repair. Assembles histone octamers onto replicating DNA in vitro. Required for several aspects of development, including seedling growth and leaf hair differentiation. Plays a critical role in the organization of shoot apical meristem (SAM) and root apical meristem (RAM) during postembryonic development by facilitating stable maintenance of gene expression states. Seems not required to maintain transcriptional repression of heterochromatic genes. Involved in heterologous recombination. May repress endocycle. The protein is Chromatin assembly factor 1 subunit FAS1 (FAS1) of Arabidopsis thaliana (Mouse-ear cress).